Consider the following 85-residue polypeptide: Large ribosomal subunit protein bL27 (85 aa).

The segment at Met-1–Arg-20 is disordered.

This sequence belongs to the bacterial ribosomal protein bL27 family.

The sequence is that of Large ribosomal subunit protein bL27 from Proteus mirabilis (strain HI4320).